A 505-amino-acid chain; its full sequence is Apolipoprotein N-acyltransferase (505 aa).

6 helical membrane-spanning segments follow: residues 26–46, 66–86, 89–109, 129–149, 161–181, and 186–206; these read FAPY…LILL, FATG…MPLI, LFLM…FAWL, LWLI…WLWL, FAPI…AGAL, and IHKQ…GFGI. The region spanning 225 to 471 is the CN hydrolase domain; it reads IQGNVDQNLK…TAVLRAELTP (247 aa). The Proton acceptor role is filled by Glu-264. Lys-330 is an active-site residue. Cys-382 functions as the Nucleophile in the catalytic mechanism. Residues 481–501 traverse the membrane as a helical segment; the sequence is FGTWPLYFWVALSLMLAWWLP.

It belongs to the CN hydrolase family. Apolipoprotein N-acyltransferase subfamily.

It localises to the cell inner membrane. The catalysed reaction is N-terminal S-1,2-diacyl-sn-glyceryl-L-cysteinyl-[lipoprotein] + a glycerophospholipid = N-acyl-S-1,2-diacyl-sn-glyceryl-L-cysteinyl-[lipoprotein] + a 2-acyl-sn-glycero-3-phospholipid + H(+). It participates in protein modification; lipoprotein biosynthesis (N-acyl transfer). Its function is as follows. Catalyzes the phospholipid dependent N-acylation of the N-terminal cysteine of apolipoprotein, the last step in lipoprotein maturation. The sequence is that of Apolipoprotein N-acyltransferase from Vibrio parahaemolyticus serotype O3:K6 (strain RIMD 2210633).